A 351-amino-acid polypeptide reads, in one-letter code: Phosphoribosylformylglycinamidine cyclo-ligase (351 aa).

This sequence belongs to the AIR synthase family.

Its subcellular location is the cytoplasm. The catalysed reaction is 2-formamido-N(1)-(5-O-phospho-beta-D-ribosyl)acetamidine + ATP = 5-amino-1-(5-phospho-beta-D-ribosyl)imidazole + ADP + phosphate + H(+). Its pathway is purine metabolism; IMP biosynthesis via de novo pathway; 5-amino-1-(5-phospho-D-ribosyl)imidazole from N(2)-formyl-N(1)-(5-phospho-D-ribosyl)glycinamide: step 2/2. The polypeptide is Phosphoribosylformylglycinamidine cyclo-ligase (Burkholderia cenocepacia (strain ATCC BAA-245 / DSM 16553 / LMG 16656 / NCTC 13227 / J2315 / CF5610) (Burkholderia cepacia (strain J2315))).